The chain runs to 37 residues: Lambda-hexatoxin-Hv1c (37 aa).

4 disulfide bridges follow: C3–C17, C10–C22, C13–C14, and C16–C32.

Belongs to the neurotoxin 11 (kappa toxin) family. In terms of tissue distribution, expressed by the venom gland.

It localises to the secreted. In terms of biological role, this excitatory toxin inhibits insect calcium-activated potassium (KCa) channels (Slo-type). Pan-neuronal expression in Drosophila is lethal but flies engineered to express the toxin only in clock neurons have defects in circadian rhythm but a normal lifespan. This chain is Lambda-hexatoxin-Hv1c, found in Hadronyche versuta (Blue mountains funnel-web spider).